A 224-amino-acid polypeptide reads, in one-letter code: Cytidylate kinase (224 aa).

11 to 19 (GPAAAGKST) provides a ligand contact to ATP.

This sequence belongs to the cytidylate kinase family. Type 1 subfamily.

The protein resides in the cytoplasm. It carries out the reaction CMP + ATP = CDP + ADP. The enzyme catalyses dCMP + ATP = dCDP + ADP. The polypeptide is Cytidylate kinase (Geobacillus thermodenitrificans (strain NG80-2)).